Consider the following 261-residue polypeptide: Thioesterase TesA (261 aa).

The tract at residues Met-1–Ala-24 is disordered. Catalysis depends on residues Ser-104, Asp-208, and His-236.

This sequence belongs to the thioesterase family.

The catalysed reaction is a fatty acyl-CoA + H2O = a fatty acid + CoA + H(+). Functionally, involved in the synthesis of both phthiocerol dimycocerosates (PDIMs) and phenolic glycolipids (PGLs), which are structurally related lipids non-covalently bound to the outer cell wall layer of M.tuberculosis and are important virulence factors. This is Thioesterase TesA (tesA) from Mycobacterium bovis (strain ATCC BAA-935 / AF2122/97).